Reading from the N-terminus, the 638-residue chain is Ubiquitin-associated and SH3 domain-containing protein B (638 aa).

Residue Ser-9 is modified to Phosphoserine. The residue at position 12 (Thr-12) is a Phosphothreonine. The UBA domain occupies 23–65 (TVKHGSALDVLLSMGFPRARAQKALASTGGRSVQAACDWLFSH). The 66-residue stretch at 243-308 (ANHETLQVIY…PENYITKADE (66 aa)) folds into the SH3 domain. Positions 369 to 638 (GPQKRCLFVC…FNWRETLLQE (270 aa)) are protein tyrosine phosphatase. Residue Arg-379 is part of the active site. Residue His-380 is the Tele-phosphohistidine intermediate of the active site. His-565 is a catalytic residue.

Homodimer. Interacts with JAK2 (in vitro). Interacts with CBL. Part of a complex containing CBL and activated EGFR. Interacts with ubiquitin and with mono-ubiquitinated proteins. Interacts with ZAP70 (ubiquitinated form). As to expression, detected in splenic T-cells and B-cells, total spleen, skeletal muscle, heart, lung, kidney, thymus, brain and liver (at protein level). Highly expressed in brain. Detected in heart, spleen, lung, liver, kidney and testis.

It is found in the cytoplasm. The protein resides in the nucleus. The catalysed reaction is O-phospho-L-tyrosyl-[protein] + H2O = L-tyrosyl-[protein] + phosphate. Its function is as follows. Interferes with CBL-mediated down-regulation and degradation of receptor-type tyrosine kinases. Promotes accumulation of activated target receptors, such as T-cell receptors and EGFR, on the cell surface. Exhibits tyrosine phosphatase activity toward several substrates including EGFR, FAK, SYK, and ZAP70. Down-regulates proteins that are dually modified by both protein tyrosine phosphorylation and ubiquitination. This is Ubiquitin-associated and SH3 domain-containing protein B (Ubash3b) from Mus musculus (Mouse).